The following is a 142-amino-acid chain: Transcriptional regulator MraZ (142 aa).

2 SpoVT-AbrB domains span residues 5–51 (ASSL…PRPV) and 77–120 (ASDV…DATK).

It belongs to the MraZ family. As to quaternary structure, forms oligomers.

The protein localises to the cytoplasm. The protein resides in the nucleoid. The polypeptide is Transcriptional regulator MraZ (Janthinobacterium sp. (strain Marseille) (Minibacterium massiliensis)).